The following is a 445-amino-acid chain: Exodeoxyribonuclease 7 large subunit (445 aa).

Belongs to the XseA family. Heterooligomer composed of large and small subunits.

Its subcellular location is the cytoplasm. The catalysed reaction is Exonucleolytic cleavage in either 5'- to 3'- or 3'- to 5'-direction to yield nucleoside 5'-phosphates.. Its function is as follows. Bidirectionally degrades single-stranded DNA into large acid-insoluble oligonucleotides, which are then degraded further into small acid-soluble oligonucleotides. This Staphylococcus aureus (strain USA300 / TCH1516) protein is Exodeoxyribonuclease 7 large subunit.